Consider the following 819-residue polypeptide: Ion-translocating oxidoreductase complex subunit C (819 aa).

4Fe-4S ferredoxin-type domains lie at 368–398 (EYAE…QQLY) and 408–437 (KSEE…IQYF). Positions 378, 381, 384, 388, 417, 420, 423, and 427 each coordinate [4Fe-4S] cluster. 2 stretches are compositionally biased toward basic and acidic residues: residues 465-477 (QARM…ERKA) and 485-513 (ARRE…KANE). 3 disordered regions span residues 465–568 (QARM…NAKK), 580–677 (AKKL…TALD), and 692–793 (AKKL…PKKA). Polar residues-rich tracts occupy residues 554 to 565 (VENQEQQTQPTN) and 587 to 601 (NSTS…TAEN). Residues 602–614 (QVEKTKSAVEKTQ) show a composition bias toward basic and acidic residues. The span at 641 to 656 (QTNSTSEAISNSQTAE) shows a compositional bias: polar residues. Residues 658-671 (EVEKTKSAVEKTEE) show a composition bias toward basic and acidic residues. 2 stretches are compositionally biased toward polar residues: residues 699–712 (NSAS…QTAE) and 755–768 (NSTS…QTAE). Over residues 770 to 782 (EVEKTKSAVEKTQ) the composition is skewed to basic and acidic residues.

This sequence belongs to the 4Fe4S bacterial-type ferredoxin family. RnfC subfamily. As to quaternary structure, the complex is composed of six subunits: RnfA, RnfB, RnfC, RnfD, RnfE and RnfG. [4Fe-4S] cluster is required as a cofactor.

It is found in the cell inner membrane. Its function is as follows. Part of a membrane-bound complex that couples electron transfer with translocation of ions across the membrane. In Haemophilus influenzae (strain ATCC 51907 / DSM 11121 / KW20 / Rd), this protein is Ion-translocating oxidoreductase complex subunit C.